The primary structure comprises 431 residues: Galanin-like G-protein coupled receptor npr-9 (431 aa).

The Extracellular segment spans residues 1-34 (MEFENLTKEEMEQLQKIYDDTISFERKIGIIIPT). A glycan (N-linked (GlcNAc...) asparagine) is linked at asparagine 5. A helical membrane pass occupies residues 35–55 (IFAVIILVGLVGNALVVIVAF). Residues 56-66 (GRQMRNSTNTL) lie on the Cytoplasmic side of the membrane. Residues 67–87 (IIGLAISDLMFLLLCVPFTAV) form a helical membrane-spanning segment. Residues 88-101 (DYAAPTWIFPEWTC) lie on the Extracellular side of the membrane. Cysteine 101 and cysteine 182 are joined by a disulfide. Residues 102-124 (SMINFFQHTSAYCSVWTLTLMAL) form a helical membrane-spanning segment. At 125–143 (DRYLAVVYPVESMTLRTPR) the chain is on the cytoplasmic side. The helical transmembrane segment at 144-164 (NTVIALCFIYIIIIASQIPVG) threads the bilayer. Topologically, residues 165–203 (RMHGIYVYDFIMEKRSTCAILTIATAEATPTMARTYFMT) are extracellular. A helical transmembrane segment spans residues 204–224 (FNVFGYVLPLGISVVLYGLML). Topologically, residues 225-268 (RKLWDMPRPGNSQSVGGRNLTNRDSGSSIRRRPEATAAKRKVTR) are cytoplasmic. The span at 235 to 252 (NSQSVGGRNLTNRDSGSS) shows a compositional bias: polar residues. The tract at residues 235–257 (NSQSVGGRNLTNRDSGSSIRRRP) is disordered. The chain crosses the membrane as a helical span at residues 269 to 289 (LVLCVLITWALCWLPLNVCFF). At 290 to 298 (MSGLAYPEP) the chain is on the extracellular side. The helical transmembrane segment at 299–319 (LVISHGVIMVIVQIASQVLAY) threads the bilayer. The Cytoplasmic segment spans residues 320–431 (TNSCLNPILY…RSKSTRSYNL (112 aa)). Polar residues predominate over residues 393 to 414 (SLLKDNSSSATSVQPLRTSIQA). A disordered region spans residues 393–431 (SLLKDNSSSATSVQPLRTSIQAKKTKNIGRSKSTRSYNL). Positions 415–425 (KKTKNIGRSKS) are enriched in basic residues.

It belongs to the G-protein coupled receptor 1 family. Exclusively expressed in the AIB interneuron.

The protein resides in the cell membrane. Neuropeptide that controls movement such as roaming, foraging and backwards locomotion or 'reversals' in response to environmental cues such as food availability or volatile odorants such as octanol. Antagonizes AIB interneuron activity to control bacterial colonization and may negatively regulate the expression of immunity-related genes such as pqm-1 and dod-22 in response to infection by P.aeruginosa. The polypeptide is Galanin-like G-protein coupled receptor npr-9 (Caenorhabditis elegans).